The following is an 88-amino-acid chain: Small ribosomal subunit protein bS20 (88 aa).

The tract at residues 1–20 is disordered; it reads MANTAQARKRARQAVVQNAH.

The protein belongs to the bacterial ribosomal protein bS20 family.

Functionally, binds directly to 16S ribosomal RNA. This is Small ribosomal subunit protein bS20 from Ralstonia pickettii (strain 12J).